The following is a 98-amino-acid chain: Large ribosomal subunit protein uL23 (98 aa).

It belongs to the universal ribosomal protein uL23 family. As to quaternary structure, part of the 50S ribosomal subunit. Contacts protein L29, and trigger factor when it is bound to the ribosome.

Its function is as follows. One of the early assembly proteins it binds 23S rRNA. One of the proteins that surrounds the polypeptide exit tunnel on the outside of the ribosome. Forms the main docking site for trigger factor binding to the ribosome. The protein is Large ribosomal subunit protein uL23 of Bifidobacterium longum (strain DJO10A).